Consider the following 776-residue polypeptide: Endonuclease MutS2 (776 aa).

330–337 contacts ATP; sequence GPNTGGKT. A Smr domain is found at 701–776; sequence LDLRGMRYEE…GSGATIAILK (76 aa).

Belongs to the DNA mismatch repair MutS family. MutS2 subfamily. As to quaternary structure, homodimer. Binds to stalled ribosomes, contacting rRNA.

Endonuclease that is involved in the suppression of homologous recombination and thus may have a key role in the control of bacterial genetic diversity. In terms of biological role, acts as a ribosome collision sensor, splitting the ribosome into its 2 subunits. Detects stalled/collided 70S ribosomes which it binds and splits by an ATP-hydrolysis driven conformational change. Acts upstream of the ribosome quality control system (RQC), a ribosome-associated complex that mediates the extraction of incompletely synthesized nascent chains from stalled ribosomes and their subsequent degradation. Probably generates substrates for RQC. This Lactococcus lactis subsp. lactis (strain IL1403) (Streptococcus lactis) protein is Endonuclease MutS2.